We begin with the raw amino-acid sequence, 321 residues long: Cytochrome c biogenesis protein CcsA (321 aa).

7 consecutive transmembrane segments (helical) span residues 9–29 (ILTHISFSTISIVITIHLITL), 44–64 (GMIATFFSITGFLVSRWVSSG), 68–88 (LSNLYESLIFLSWTLYILHTI), 143–163 (MLLSYATLLCGSLLSAALLII), 225–245 (VISLGFTLLTVGILCGAVWAN), 259–273 (TWAFITWTIFAIYLH), and 288–308 (VASIGFLIIWICYFGINLLGI).

The protein belongs to the CcmF/CycK/Ccl1/NrfE/CcsA family. May interact with Ccs1.

The protein resides in the plastid. It is found in the chloroplast thylakoid membrane. Functionally, required during biogenesis of c-type cytochromes (cytochrome c6 and cytochrome f) at the step of heme attachment. The polypeptide is Cytochrome c biogenesis protein CcsA (Saccharum hybrid (Sugarcane)).